The primary structure comprises 435 residues: ATP-dependent protease ATPase subunit HslU (435 aa).

ATP contacts are provided by residues Val18, 60 to 65, Asp248, Glu313, and Arg385; that span reads GVGKTE.

This sequence belongs to the ClpX chaperone family. HslU subfamily. As to quaternary structure, a double ring-shaped homohexamer of HslV is capped on each side by a ring-shaped HslU homohexamer. The assembly of the HslU/HslV complex is dependent on binding of ATP.

Its subcellular location is the cytoplasm. In terms of biological role, ATPase subunit of a proteasome-like degradation complex; this subunit has chaperone activity. The binding of ATP and its subsequent hydrolysis by HslU are essential for unfolding of protein substrates subsequently hydrolyzed by HslV. HslU recognizes the N-terminal part of its protein substrates and unfolds these before they are guided to HslV for hydrolysis. This chain is ATP-dependent protease ATPase subunit HslU, found in Parvibaculum lavamentivorans (strain DS-1 / DSM 13023 / NCIMB 13966).